Consider the following 93-residue polypeptide: SH3 domain-binding glutamic acid-rich-like protein 3 (93 aa).

Ser2 carries the post-translational modification N-acetylserine. A glycan (O-linked (GalNAc...) serine) is linked at Ser2. Residues 2–93 (SGRRVYSTSV…NTLQEFLKLA (92 aa)) enclose the Glutaredoxin domain. Residues Thr9 and Thr12 are each glycosylated (O-linked (GalNAc...) threonine).

The protein belongs to the SH3BGR family. In terms of assembly, homodimer. Interacts with MYO1C (via its IQ motifs); the interaction is dependent on calcium and takes place at membrane ruffles. In terms of processing, may be glycosylated.

The protein localises to the cytoplasm. It localises to the cytosol. It is found in the cell projection. Its subcellular location is the ruffle membrane. The protein resides in the nucleus. In terms of biological role, could act as a modulator of glutaredoxin biological activity. May play a role in cytoskeleton organization. The sequence is that of SH3 domain-binding glutamic acid-rich-like protein 3 (SH3BGRL3) from Pongo abelii (Sumatran orangutan).